The chain runs to 87 residues: DNA-directed RNA polymerase subunit omega (87 aa).

The protein belongs to the RNA polymerase subunit omega family. The RNAP catalytic core consists of 2 alpha, 1 beta, 1 beta' and 1 omega subunit. When a sigma factor is associated with the core the holoenzyme is formed, which can initiate transcription.

The enzyme catalyses RNA(n) + a ribonucleoside 5'-triphosphate = RNA(n+1) + diphosphate. Functionally, promotes RNA polymerase assembly. Latches the N- and C-terminal regions of the beta' subunit thereby facilitating its interaction with the beta and alpha subunits. This Alcanivorax borkumensis (strain ATCC 700651 / DSM 11573 / NCIMB 13689 / SK2) protein is DNA-directed RNA polymerase subunit omega.